We begin with the raw amino-acid sequence, 298 residues long: GTPase Era (298 aa).

An Era-type G domain is found at 3–170; it reads KSGFVTIVGR…VELMKKAMPE (168 aa). The interval 11–18 is G1; the sequence is GRPNVGKS. Position 11 to 18 (11 to 18) interacts with GTP; that stretch reads GRPNVGKS. The tract at residues 37–41 is G2; it reads QTTRN. The segment at 58–61 is G3; sequence DTPG. Residues 58-62 and 120-123 each bind GTP; these read DTPGI and NKVD. Residues 120-123 form a G4 region; the sequence is NKVD. Positions 149–151 are G5; the sequence is ISA. A KH type-2 domain is found at 201–278; the sequence is LRDEVPHGIA…NLKIWVKVRK (78 aa).

This sequence belongs to the TRAFAC class TrmE-Era-EngA-EngB-Septin-like GTPase superfamily. Era GTPase family. As to quaternary structure, monomer.

It localises to the cytoplasm. It is found in the cell membrane. In terms of biological role, an essential GTPase that binds both GDP and GTP, with rapid nucleotide exchange. Plays a role in 16S rRNA processing and 30S ribosomal subunit biogenesis and possibly also in cell cycle regulation and energy metabolism. The sequence is that of GTPase Era from Clostridium beijerinckii (strain ATCC 51743 / NCIMB 8052) (Clostridium acetobutylicum).